The sequence spans 395 residues: ETS-related transcription factor Elf-3 (395 aa).

Positions 69 to 155 (EPPAVLHLAE…AQLRDLTSSS (87 aa)) constitute a PNT domain. Residues 200–240 (ASPYYGSSYGPGAPSPGSSDFSTSGTDTPQSSHSSDSGGSD) show a composition bias toward low complexity. Positions 200 to 275 (ASPYYGSSYG…HGKRKRGRPR (76 aa)) are disordered. Over residues 246–265 (TDSKVFPRDGFPDYKKGEPK) the composition is skewed to basic and acidic residues. Over residues 266–275 (HGKRKRGRPR) the composition is skewed to basic residues. Positions 297–379 (THLWEFIRDI…DGRRLVYKFG (83 aa)) form a DNA-binding region, ETS.

This sequence belongs to the ETS family. As to quaternary structure, interacts with TBP. Interacts with CREBBP and EP300; these act as transcriptional coactivators of ELF3 and positively modulate its function. Interacts with XRCC5/KU86 and XRCC6/KU70; these inhibit the ability of ELF3 to bind DNA and negatively modulate its transcriptional activity. Associated with CLND7 and POU2F3. Interacts with ZNF768.

The protein resides in the cytoplasm. The protein localises to the nucleus. Its function is as follows. Transcriptional activator that binds and transactivates ETS sequences containing the consensus nucleotide core sequence GGA[AT]. Acts synergistically with POU2F3 to transactivate the SPRR2A promoter and with RUNX1 to transactivate the ANGPT1 promoter. Also transactivates collagenase, CCL20, CLND7, FLG, KRT8, NOS2, PTGS2, SPRR2B, TGFBR2 and TGM3 promoters. Represses KRT4 promoter activity. Involved in mediating vascular inflammation. May play an important role in epithelial cell differentiation and tumorigenesis. May be a critical downstream effector of the ERBB2 signaling pathway. May be associated with mammary gland development and involution. Plays an important role in the regulation of transcription with TATA-less promoters in preimplantation embryos, which is essential in preimplantation development. The sequence is that of ETS-related transcription factor Elf-3 from Rattus norvegicus (Rat).